A 595-amino-acid polypeptide reads, in one-letter code: APOBEC1 complementation factor (595 aa).

RRM domains follow at residues 56 to 134, 136 to 218, and 231 to 303; these read CEIF…ASVD, CRLF…WAEP, and KILY…LAKP. The interval 360–409 is required for nuclear localization; sequence HFPATKGHLSNRALIRTPSVREIYMNVPVGAAGVRGLGGRGYLAYTGLGR.

Part of the apolipoprotein B mRNA editing complex with APOBEC1. Interacts with TNPO2; TNPO2 may be responsible for transport of A1CF into the nucleus. Interacts with SYNCRIP. Interacts with CELF2/CUGBP2. Interacts with RBM47. In terms of tissue distribution, expressed primarily in liver, small intestine and kidney.

It is found in the nucleus. Its subcellular location is the endoplasmic reticulum. It localises to the cytoplasm. Essential component of the apolipoprotein B mRNA editing enzyme complex which is responsible for the postranscriptional editing of a CAA codon for Gln to a UAA codon for stop in APOB mRNA. Binds to APOB mRNA and is probably responsible for docking the catalytic subunit, APOBEC1, to the mRNA to allow it to deaminate its target cytosine. The complex also seems to protect the edited APOB mRNA from nonsense-mediated decay. This Mus musculus (Mouse) protein is APOBEC1 complementation factor (A1cf).